The following is a 448-amino-acid chain: Mitochondrial distribution and morphology protein 10 (448 aa).

It belongs to the MDM10 family. In terms of assembly, component of the ER-mitochondria encounter structure (ERMES) or MDM complex, composed of MMM1, MDM10, MDM12 and MDM34. Associates with the mitochondrial outer membrane sorting assembly machinery SAM(core) complex.

The protein resides in the mitochondrion outer membrane. Functionally, component of the ERMES/MDM complex, which serves as a molecular tether to connect the endoplasmic reticulum and mitochondria. Components of this complex are involved in the control of mitochondrial shape and protein biogenesis and may function in phospholipid exchange. MDM10 is involved in the late assembly steps of the general translocase of the mitochondrial outer membrane (TOM complex). Functions in the TOM40-specific route of the assembly of outer membrane beta-barrel proteins, including the association of TOM40 with the receptor TOM22 and small TOM proteins. Can associate with the SAM(core) complex as well as the MDM12-MMM1 complex, both involved in late steps of the major beta-barrel assembly pathway, that is responsible for biogenesis of all outer membrane beta-barrel proteins. May act as a switch that shuttles between both complexes and channels precursor proteins into the TOM40-specific pathway. Plays a role in mitochondrial morphology and in the inheritance of mitochondria. The protein is Mitochondrial distribution and morphology protein 10 of Zygosaccharomyces rouxii (strain ATCC 2623 / CBS 732 / NBRC 1130 / NCYC 568 / NRRL Y-229).